The sequence spans 205 residues: High frequency lysogenization protein HflD homolog (205 aa).

Belongs to the HflD family.

The protein resides in the cytoplasm. Its subcellular location is the cell inner membrane. The chain is High frequency lysogenization protein HflD homolog from Vibrio atlanticus (strain LGP32) (Vibrio splendidus (strain Mel32)).